The sequence spans 166 residues: Eukaryotic translation initiation factor 5A (166 aa).

Residues Met1–Tyr21 form a disordered region. Lys53 carries the post-translational modification Hypusine. The interval Glu101–Asp121 is disordered. A compositionally biased stretch (acidic residues) spans Met112–Asp121.

Belongs to the eIF-5A family. Lys-53 undergoes hypusination, a unique post-translational modification that consists in the addition of a butylamino group from spermidine to lysine side chain, leading to the formation of the unusual amino acid hypusine. eIF-5As are the only known proteins to undergo this modification, which is essential for their function.

The protein localises to the cytoplasm. Its function is as follows. Translation factor that promotes translation elongation and termination, particularly upon ribosome stalling at specific amino acid sequence contexts. Binds between the exit (E) and peptidyl (P) site of the ribosome and promotes rescue of stalled ribosome: specifically required for efficient translation of polyproline-containing peptides as well as other motifs that stall the ribosome. Acts as a ribosome quality control (RQC) cofactor by joining the RQC complex to facilitate peptidyl transfer during CAT tailing step. In Leishmania donovani, this protein is Eukaryotic translation initiation factor 5A.